We begin with the raw amino-acid sequence, 339 residues long: Ketol-acid reductoisomerase (NADP(+)) (339 aa).

The 182-residue stretch at 1–182 (MRVYYDRDAD…GGGRSGIIET (182 aa)) folds into the KARI N-terminal Rossmann domain. Residues 24 to 27 (YGSQ), Arg-48, Ser-51, Thr-53, and 83 to 86 (DELQ) each bind NADP(+). Residue His-108 is part of the active site. Gly-134 contributes to the NADP(+) binding site. Positions 183-328 (SFREECETDL…EKLRAMMPWI (146 aa)) constitute a KARI C-terminal knotted domain. The Mg(2+) site is built by Asp-191, Glu-195, Glu-227, and Glu-231. Ser-252 provides a ligand contact to substrate.

It belongs to the ketol-acid reductoisomerase family. Mg(2+) serves as cofactor.

The catalysed reaction is (2R)-2,3-dihydroxy-3-methylbutanoate + NADP(+) = (2S)-2-acetolactate + NADPH + H(+). It carries out the reaction (2R,3R)-2,3-dihydroxy-3-methylpentanoate + NADP(+) = (S)-2-ethyl-2-hydroxy-3-oxobutanoate + NADPH + H(+). Its pathway is amino-acid biosynthesis; L-isoleucine biosynthesis; L-isoleucine from 2-oxobutanoate: step 2/4. It functions in the pathway amino-acid biosynthesis; L-valine biosynthesis; L-valine from pyruvate: step 2/4. Functionally, involved in the biosynthesis of branched-chain amino acids (BCAA). Catalyzes an alkyl-migration followed by a ketol-acid reduction of (S)-2-acetolactate (S2AL) to yield (R)-2,3-dihydroxy-isovalerate. In the isomerase reaction, S2AL is rearranged via a Mg-dependent methyl migration to produce 3-hydroxy-3-methyl-2-ketobutyrate (HMKB). In the reductase reaction, this 2-ketoacid undergoes a metal-dependent reduction by NADPH to yield (R)-2,3-dihydroxy-isovalerate. The protein is Ketol-acid reductoisomerase (NADP(+)) of Paramagnetospirillum magneticum (strain ATCC 700264 / AMB-1) (Magnetospirillum magneticum).